A 90-amino-acid polypeptide reads, in one-letter code: Probable Fe(2+)-trafficking protein (90 aa).

The protein belongs to the Fe(2+)-trafficking protein family. Monomer.

Functionally, could be a mediator in iron transactions between iron acquisition and iron-requiring processes, such as synthesis and/or repair of Fe-S clusters in biosynthetic enzymes. The polypeptide is Probable Fe(2+)-trafficking protein (Yersinia pseudotuberculosis serotype O:1b (strain IP 31758)).